The primary structure comprises 142 residues: Large ribosomal subunit protein uL13 (142 aa).

Belongs to the universal ribosomal protein uL13 family. In terms of assembly, part of the 50S ribosomal subunit.

Functionally, this protein is one of the early assembly proteins of the 50S ribosomal subunit, although it is not seen to bind rRNA by itself. It is important during the early stages of 50S assembly. The protein is Large ribosomal subunit protein uL13 of Xylella fastidiosa (strain M23).